A 54-amino-acid chain; its full sequence is MASEVRIKLLLECTECKRRNYATEKNKRNTPNKLELRKYCPWCRKHTVHREVKI.

It belongs to the bacterial ribosomal protein bL33 family.

This chain is Large ribosomal subunit protein bL33, found in Thermus thermophilus (strain ATCC BAA-163 / DSM 7039 / HB27).